A 1418-amino-acid chain; its full sequence is MDETDPVPDMSLLPDTVPVVVSGDGSAAGIQLCPALILGSPQALPGAIKHIYSRLAAAASEVDQGVPDLIISLISHGNSLSTKYMSSVENGLKSFLIGCGTWLISSGEVNDPMSRVASGALKNVLPQLEHQAEVLHILVNSDDMIASDTTNSKSVVDTSLNTLLLICRKEPNDSYETVASSIAKLRAATAVKLAHPPPALLIGVPSEPMSPSTYGNSAAILLSPSNDKRPFPVAIFAGASKESLIELLFFVEHGIPVIILQDSCELCAILHSSHLLLETSNFDNDKFISWLRSQLYPLGLADCYTLITKLLVSSNSGDVQLIEFIDSSQLSELSSVVVDRCLECYATTGEERQVLLLAAKLNSPSVLSSMDVAAQLDEELLTMILCECITKDDQLHFLSSVLQLSPPIRVTSNMLIRMMHHADEHFFTTIVLCQCMGYSYIPSEIDPRFANDIQKLVKKLSFGVDNLFDPNVFCNDSSHRDKHESIRILAIWSLLLHRPGIVKCLAAFADEPVAFSMVLSRIARSLGHESHDWHFYEKSLNTLSDSLSGSATTLFDTVFSTSPAKAYQLLCQPMEYFYGFNMTQLAFHCNAREIIAHECCQRWVHRKLYGNLQAKNFPIFLPKWAKICISAVLIIPVKFWMLVRPRERTKQDTVSPTVALLDVGKFPQKQRAISTYSVISSRSEALTALTAPLSTAFGFNSALNGAESATPQSMVFPLNIEEIDKDPRPFGKKNRIRRAHAPTLSTFYSTPIVKYWLSLLFRIVFICCLAYSVVLPGCGSNLWDTGMWVWSFFWWIENCFVLTARARKIPLSLMPWRVFDVFAFFVFLILLLVMKVFPVTPVLEVLGIDSIYSAKVVSAFFVLYVSYSTLFTYIPLSDIFGPMIVRVKLMLLRDFTNFLFMIALVMLSSAVAIQAVVFPDRPVTMEVFRKTLSWIWLSLFTTDLSNLSESETCRKSFLGAPKRYCSSVGQYANPSCPSQSLPAYLIVIEYFVILKLLLWPILFAFFSKTAKNVDDEADKIWRFQLYSLAEDFRLRPPLPPPLTIFCLICSACCRFSNSFSGFFSDFDHPDFEARDKCRTTWKFGSIYRNPSVPFKRNEFVNSFWRKLSMEQWKNTQQKAKISANKSELQELHNIHNHIRMMTLRDSYENSGTRKASELQFFEKYPESNILKISVNMVSKPWTVLVPRYNPPFYCKPAEDFPSDVQKYVDIATEQNVGELKRIWRSRQANDVTSSNDKCWKLSAAGFPLNPNGRTGMAGRGNHPRFGANRRCYYVVLSGGVEAKCQVLVDSQKNIPNEWHLENSSKDEHLTSILKMIGISDSDAHMFSMRRLDSSIITADKRIPSNDTSPAHLASEVAENENDTDNAWTEHDVWAISLRERRIITTIIGYSWLPTSAIRGTVLPWQADLVFRAKTIYGL.

The next 7 helical transmembrane spans lie at 617-637, 755-775, 782-802, 818-838, 856-876, 898-918, and 986-1006; these read FPIF…IIPV, YWLS…SVVL, LWDT…CFVL, VFDV…KVFP, VVSA…YIPL, FLFM…AVVF, and IVIE…FAFF.

The protein localises to the membrane. In terms of biological role, plays a major role in programmed cell death. This is Protein ced-11 (ced-11) from Caenorhabditis elegans.